The chain runs to 1705 residues: Homeobox-DDT domain protein RLT1 (1705 aa).

5 disordered regions span residues 1-53 (MEMG…QLET), 118-167 (ELPA…EYET), 237-267 (HDPRPRRSHAAARSFHEQQSLDDPSSFTPNM), 296-322 (GPVPRSYVTPGHASRNCSTSQQDMPSP), and 352-414 (GVRK…RKEE). The segment at residues 39–98 (VKPKRQMKTPFQLETLEKVYSEEKYPSEATRAELSEKLDLSDRQLQMWFCHRRLKDKKDG) is a DNA-binding region (homeobox). Positions 136 to 159 (GSESGCSPYSNSRRNFASGSSSSR) are enriched in low complexity. Polar residues-rich tracts occupy residues 253 to 265 (EQQSLDDPSSFTP) and 310 to 319 (RNCSTSQQDM). Residues 549 to 608 (DETVGNLLMVWRFLISFSDVLDLWPFTLDEFIQAFHDYDSRLLGEIHVTLLRSIIRDVED) enclose the DDT domain. One can recognise an HTH HARE-type domain in the interval 731 to 800 (GTVKFAAFHV…APSTYCVRAP (70 aa)). Disordered stretches follow at residues 1028–1053 (TRERDSFDRDPSQLLDETKPLEDLSN), 1198–1229 (VNHSPTDSVSPSSSAISGSNSDSMETSTSIRV), 1441–1502 (PEDE…KAQS), 1561–1635 (PKSE…FVDY), and 1652–1705 (AIEE…SSDS). Positions 1201 to 1220 (SPTDSVSPSSSAISGSNSDS) are enriched in low complexity. A compositionally biased stretch (basic and acidic residues) spans 1455–1465 (SPFKGKGPREQ). Composition is skewed to acidic residues over residues 1565–1574 (EVEEDEEEEE), 1611–1628 (VDDESDNSVGVESEDEDG), and 1669–1684 (GEDDAEMSESSEDDDV).

In terms of assembly, interacts with CHR11 and CHR17. Interacts (via the DDT domain) with CHR11 (via C-terminus). As to expression, highly expressed in growing tissues such as inflorescence and flower meristems, young leaves and floral organs. Expressed in roots, rosette and cauline leaves, stems, flowers, inflorescences and siliques.

It localises to the nucleus. In terms of biological role, transcriptional regulator required for the maintenance of the plant vegetative phase. In association with CHR11 or CHR17 may prevent the early activation of the vegetative-to-reproductive transition by regulating key genes that contribute to flower timing, such as FT, SEP1, SEP3, AGL8/FUL, SOC1 and FLC. This chain is Homeobox-DDT domain protein RLT1, found in Arabidopsis thaliana (Mouse-ear cress).